The primary structure comprises 148 residues: Large-conductance mechanosensitive channel (148 aa).

2 helical membrane-spanning segments follow: residues 9 to 29 (AFAV…GAAF) and 79 to 99 (IQTV…VKAI).

The protein belongs to the MscL family. In terms of assembly, homopentamer.

It is found in the cell inner membrane. In terms of biological role, channel that opens in response to stretch forces in the membrane lipid bilayer. May participate in the regulation of osmotic pressure changes within the cell. The sequence is that of Large-conductance mechanosensitive channel from Pseudomonas syringae pv. syringae (strain B728a).